A 137-amino-acid chain; its full sequence is Small ribosomal subunit protein uS9 (137 aa).

Residues 106-117 (KTEGYLTRDPRA) show a composition bias toward basic and acidic residues. Residues 106–137 (KTEGYLTRDPRAKERRKYGLRKARKAPQYSKR) form a disordered region. Over residues 118–137 (KERRKYGLRKARKAPQYSKR) the composition is skewed to basic residues.

This sequence belongs to the universal ribosomal protein uS9 family.

In Thermosynechococcus vestitus (strain NIES-2133 / IAM M-273 / BP-1), this protein is Small ribosomal subunit protein uS9.